We begin with the raw amino-acid sequence, 245 residues long: Rhamnogalacturonan acetylesterase (245 aa).

Positions 1–17 (MKSIALTSLSLLPSALA) are cleaved as a signal peptide. S26 serves as the catalytic Nucleophile. C100 and C108 form a disulfide bridge. Active-site residues include D204 and H207. C226 and C244 form a disulfide bridge.

The protein belongs to the 'GDSL' lipolytic enzyme family.

The protein localises to the secreted. The enzyme catalyses Hydrolytic cleavage of 2-O-acetyl- or 3-O-acetyl groups of alpha-D-galacturonic acid in rhamnogalacturonan I.. In terms of biological role, plays a key role in the degradation of rhamnogalacturonan in the cell wall. Involved in degradation of pectin. The protein is Rhamnogalacturonan acetylesterase of Emericella nidulans (strain FGSC A4 / ATCC 38163 / CBS 112.46 / NRRL 194 / M139) (Aspergillus nidulans).